Reading from the N-terminus, the 1454-residue chain is MYGYLRETDDSTAINYSAYGKFLPGENTGFQLLTIGAKFLRIFRVNPYVLKEPGEDNEEWQQKTKLECMFSCRLLNKCQSVAVARVPQLPDQDSILMTFDDAKLSIVAVNEKERNMQTISLHAFENEYLRDGFTTYFNPPIVRTDPANRCAASLVYGKHIAILPFHENSKRILSYIIPLKQIDPRLDNVADMVFLEGYYEPTILFLYEPLQTTPGRACVRYDTMCIMGVSVNIVDRQFAVVWQTANLPMDCNSLLSIPKPLGGAVVFGSNTIVYLNQAVPPCGIVLNSCYDGFTKFPLKDMKHLKMTLDCSTSVYMEDGRIAVGSREGDLYLLRLVTSSGGATVKSLEFSKVCDTSIAFTLTVCAPGHLFVGSRLGDSQLLEYTLLKVTKESAKKQRLEQQNPSEIELDEDDIELYGGAIEMQQNDDDEQISESLQFRELDRLLNVGPVKSMCFGRPNYMSNDLIDAKRKDPVFDLVTASGHGKNGALCVHQRSMRPEIITSSLLEGAEQLWAVGRKENESHKYLIVSRVRSTLILELGEELVELEEQLFVTNEPTVAAGELLQGALAVQVTSTCIALVTDGQQMQEVHIDSNFPVVQASIVDPYVAVLTQNGRPLLYELAMEPYVHLREVNVNETSFATFSEQISTQLTSVSIYSDASQIMKKNTVDGRDEKPENAAENGHHVAVPKIKKEIPDDDAMLYGEDDDFLYGDAEEDEPMVAAESGESSTRLQNTRKRKRLGHDAIMSSRGGEQSDAIDPTRTYSSITHWLVVAHDNGRITIHSLPDLELVYQIGRFSNVPELLVDMTVEEEEKEKKAKQTAAQEKEKETEKKKDDAKNEEDQVNSEMKKLCEKVVEAQIVGMGINQAHPVLIAIIDEEVVLYEMFASYNPQPGHLGVAFRKLPHLIGLRTSPYVNIDGKRAPFEMEMEHGKRYTLIHPFERISSINNGVMIGGAVPTLLVYGAWGGMQTHQMTIDGSIKAFTPFNNENVLHGFVYMTQQKSELRIARMHPDFDYDMPYPVKKIEVGKTVHNVRYLMNSDIYAVVSSVPKPSNKIWVVMNDDKQEEIHEKDENFVLPAPPKYTLNLFSSQDWAAVPNTEFEFEDMEAVTAMEDVPLKSESRYGGLDTYLALATVNNYGEEVLVRGRIILCEVIEVVPEPGQPTSNRKIKVLYDKEQKGPVTGLCAINGLLLSGMGQKVFIWQFKDNDLMGISFLDMHYYVYQLHSIRTIALALDARESMSLIRFQEENKAMSIASRDDRKCAQAPMASEFLVDGMHIGFLLSDEHGNITLFSYSPEAPESNGGERLTVKAAINIGTNINAFLRVKGHTSLLDSSSPEERENIEQRMNTIFGSLDGSFGYIRPLTEKSYRRLHFLQTFIGSVTPQIAGLHIKGARSSKPSQPIVNGRNARNLIDGDVVEQYLHLSVYDKTDLARRLGVGRYHILDDLMQLRRMAYYY.

Residues 810–843 form a disordered region; it reads EEKEKKAKQTAAQEKEKETEKKKDDAKNEEDQVN. The span at 812–843 shows a compositional bias: basic and acidic residues; the sequence is KEKKAKQTAAQEKEKETEKKKDDAKNEEDQVN.

It belongs to the CPSF1 family. CPSF is a heterotetramer composed of four distinct subunits 160 (cpsf-1), 100 (cpsf-2), 70 (cpsf-3), and 30 kDa (cpsf-4).

It is found in the nucleus. In terms of biological role, CPSF plays a key role in pre-mRNA 3'-end formation, recognizing the AAUAAA signal sequence and interacting with poly(A)polymerase and other factors to bring about cleavage and poly(A) addition. This subunit is involved in the RNA recognition step of the polyadenylation reaction. This Caenorhabditis briggsae protein is Probable cleavage and polyadenylation specificity factor subunit 1.